The following is a 419-amino-acid chain: MNIIDELEWRGAVNQQTDEEGLRKLVEEKKISLYCGVDPTGDSMHIGHLIPFMMMKRFQLAGHHPVILIGGATGTIGDPSGRQSERQLQTLEVVQHNVDALTAQMKKLFDFGGNSEVKMVNNYDWTHEINIIEFLRDYGKNFSINSMLAKDIVASRLDTGISFTEFTYQILQAMDFHHLYKKEDVQLQIGGSDQWGNITSGLDLIRKLEGHEAKVFGLTIPLLLKSDGTKFGKSAGGAVWLDPEKTTPFEFYQFWVNTDDRDVVKYLKYFTFLTKERIDELAVKVETEPHKREAQKVLAEEMTKFVHGEEALLQAVKITAALFSGDIKSLTADEIEQGFKEMPTFQSSKETKNIVEWLVDLGIEPSRRQAREDINNGAISMNGEKVTDVGTDVTVENSFDGRFIIIRKGKKNYSLVKLG.

Y34 is an L-tyrosine binding site. A 'HIGH' region motif is present at residues 39–48; sequence PTGDSMHIGH. Positions 168 and 172 each coordinate L-tyrosine. Residues 230-234 carry the 'KMSKS' region motif; sequence KFGKS. K233 contacts ATP. Positions 352–418 constitute an S4 RNA-binding domain; that stretch reads KNIVEWLVDL…GKKNYSLVKL (67 aa).

Belongs to the class-I aminoacyl-tRNA synthetase family. TyrS type 1 subfamily. In terms of assembly, homodimer.

The protein localises to the cytoplasm. It carries out the reaction tRNA(Tyr) + L-tyrosine + ATP = L-tyrosyl-tRNA(Tyr) + AMP + diphosphate + H(+). Catalyzes the attachment of tyrosine to tRNA(Tyr) in a two-step reaction: tyrosine is first activated by ATP to form Tyr-AMP and then transferred to the acceptor end of tRNA(Tyr). The polypeptide is Tyrosine--tRNA ligase 2 (Bacillus cereus (strain ZK / E33L)).